The sequence spans 264 residues: Thymidylate synthase (264 aa).

A dUMP-binding site is contributed by arginine 21. Residue histidine 51 participates in (6R)-5,10-methylene-5,6,7,8-tetrahydrofolate binding. Residue 126 to 127 participates in dUMP binding; sequence RR. Cysteine 146 acts as the Nucleophile in catalysis. DUMP is bound by residues 166 to 169, asparagine 177, and 207 to 209; these read RSGD and HIY. A (6R)-5,10-methylene-5,6,7,8-tetrahydrofolate-binding site is contributed by aspartate 169. Alanine 263 contacts (6R)-5,10-methylene-5,6,7,8-tetrahydrofolate.

It belongs to the thymidylate synthase family. Bacterial-type ThyA subfamily. Homodimer.

It localises to the cytoplasm. The enzyme catalyses dUMP + (6R)-5,10-methylene-5,6,7,8-tetrahydrofolate = 7,8-dihydrofolate + dTMP. The protein operates within pyrimidine metabolism; dTTP biosynthesis. Catalyzes the reductive methylation of 2'-deoxyuridine-5'-monophosphate (dUMP) to 2'-deoxythymidine-5'-monophosphate (dTMP) while utilizing 5,10-methylenetetrahydrofolate (mTHF) as the methyl donor and reductant in the reaction, yielding dihydrofolate (DHF) as a by-product. This enzymatic reaction provides an intracellular de novo source of dTMP, an essential precursor for DNA biosynthesis. This Sinorhizobium medicae (strain WSM419) (Ensifer medicae) protein is Thymidylate synthase.